A 181-amino-acid chain; its full sequence is CASP-like protein 2C1 (181 aa).

Topologically, residues 1–7 (MALEIPK) are cytoplasmic. A helical membrane pass occupies residues 8-28 (IEAILRGIAILLLVSTACLVG). The Extracellular portion of the chain corresponds to 29–49 (LDSQTKFVIVYEKEVTYKDLH). The chain crosses the membrane as a helical span at residues 50–70 (ALVVLVYVDAVAAAYNLLQLC). The Cytoplasmic segment spans residues 71–98 (RCSVSALSKGNFKGSYRYLSWACFVLDQ). The helical transmembrane segment at 99 to 119 (LAAYTTFAAHSAALQHSVLGI) threads the bilayer. Residues 120 to 140 (TGAKVFQWMKWCNRFTRFCFQ) are Extracellular-facing. Residues 141–161 (IGGALTCGYIASVLMVMISFI) traverse the membrane as a helical segment. Residues 162 to 181 (SAFNLFRLYSPKHFLRLKGT) are Cytoplasmic-facing.

This sequence belongs to the Casparian strip membrane proteins (CASP) family. As to quaternary structure, homodimer and heterodimers.

Its subcellular location is the cell membrane. This chain is CASP-like protein 2C1, found in Populus trichocarpa (Western balsam poplar).